A 760-amino-acid chain; its full sequence is Ferric/cupric reductase transmembrane component 1 (760 aa).

An N-terminal signal peptide occupies residues 1-18; that stretch reads MKIQQLIVFLFAVVLIDA. The Extracellular segment spans residues 19–212; the sequence is RTPKRYSELD…NNNFNLSINY (194 aa). 6 N-linked (GlcNAc...) asparagine glycosylation sites follow: Asn-78, Asn-91, Asn-111, Asn-143, Asn-155, and Asn-207. A disordered region spans residues 119 to 177; it reads TTKSSSGSKTSASASKSSKSTGSSNASKSSTNAHGSNSSTSSTSSSSSKSGKGNSGTST. A helical transmembrane segment spans residues 213–233; it reads GSGLLGYWAGILAIAIFANMI. Topologically, residues 234-288 are cytoplasmic; sequence KKMFPSLTNYLSGSISNLFRKHLFLPATFRKKKAQEFSIGVYGFFDGLIPTRLET. The chain crosses the membrane as a helical span at residues 289–309; the sequence is IIVVIFVVLTGLFSALHIHHV. At 310–324 the chain is on the extracellular side; that stretch reads KDNPQYATKNAELGH. A helical membrane pass occupies residues 325–345; that stretch reads LIADRTGILGTFLIPLLILFG. Positions 330 to 445 constitute a Ferric oxidoreductase domain; the sequence is TGILGTFLIP…HIVLVVFFVV (116 aa). The Cytoplasmic segment spans residues 346–371; that stretch reads GRNNFLQWLTGWDFATFIMYHRWISR. 2 residues coordinate heme: His-366 and His-380. A helical membrane pass occupies residues 372–392; sequence VDVLLIIVHAITFSVSDKATG. Residues 393-403 lie on the Extracellular side of the membrane; the sequence is KYNTRMKRDFM. The chain crosses the membrane as a helical span at residues 404–424; sequence IWGTVSTICGGFILFQAMLFF. Residues 425–430 lie on the Cytoplasmic side of the membrane; sequence RRKCYE. The chain crosses the membrane as a helical span at residues 431–451; that stretch reads VFFLIHIVLVVFFVVGGYYHL. Residues His-436 and His-450 each coordinate heme. Residues 452 to 760 are Extracellular-facing; the sequence is ESQGYGDFMW…EYHEQLQTWA (309 aa). The region spanning 465-583 is the FAD-binding FR-type domain; sequence AVWAFDRVVR…EGPYGEPSSA (119 aa). 575–578 is a binding site for NADP(+); that stretch reads GPYG. A glycan (N-linked (GlcNAc...) asparagine) is linked at Asn-615. Residue 726–727 coordinates NADP(+); it reads CG. A glycan (N-linked (GlcNAc...) asparagine) is linked at Asn-744.

This sequence belongs to the ferric reductase (FRE) family. The cofactor is FAD. It depends on heme as a cofactor.

Its subcellular location is the cell membrane. It catalyses the reaction 2 a Fe(II)-siderophore + NADP(+) + H(+) = 2 a Fe(III)-siderophore + NADPH. Its function is as follows. Ferric reductase responsible for reducing extracellular iron and copper prior to import. Catalyzes the reductive uptake of Fe(3+)-salts and Fe(3+) bound to catecholate or hydroxamate siderophores. Fe(3+) is reduced to Fe(2+), which then dissociates from the siderophore and can be imported by the high-affinity Fe(2+) transport complex in the plasma membrane. Also participates in Cu(2+) reduction and Cu(+) uptake. Involved in maintenance of cell wall integrity (CWI), mitochondrial function, and interaction between the pathogen and the host. In Candida albicans (strain SC5314 / ATCC MYA-2876) (Yeast), this protein is Ferric/cupric reductase transmembrane component 1.